Consider the following 428-residue polypeptide: MCDVVLGSQWGDEGKGKLVDLLCDDIDVCARCAGGNNAGHTIVVDKTKYDFHMLPSGLVNPNCKNLVGSGVVIHVPSFFQELENLEAKGLDCRDRLFVSSRAHLVFDFHQRTDKLKEAELSTNKKAIGTTGKGIGPTYSTKASRSGIRVHHLVNPDPAAWEDFKTRYMRLVESRQKRYGQFDYDYEEELARYEKYRETLRPFVVDSVVFMHDAIAANKKILVEGANALMLDIDFGTYPYVTSSSTGIGGVLTGLGIPPRTIKNVYGVVKAYTTRVGEGPFPTEQLNEVGETLQDVGAEYGVTTGRKRRCGWLDLVVLKYSNAINGYTSLNITKLDVLDKFKEIEVGVAYKLNGKELPSFPEDLIDLAKVEVVYKKFPGWEQDITGISKYEDLPENAKNYLKFIEEYLGVPIQWVGTGPARESMLEKKI.

Residues 11-17 and 39-41 each bind GTP; these read GDEGKGK and GHT. The Proton acceptor role is filled by aspartate 12. Residues aspartate 12 and glycine 39 each coordinate Mg(2+). Residues 12 to 15, 37 to 40, threonine 130, arginine 144, asparagine 226, threonine 241, and arginine 305 each bind IMP; these read DEGK and NAGH. Histidine 40 serves as the catalytic Proton donor. Position 301-307 (301-307) interacts with substrate; it reads VTTGRKR. GTP is bound by residues arginine 307, 333 to 335, and 415 to 417; these read KLD and GTG.

The protein belongs to the adenylosuccinate synthetase family. Homodimer. It depends on Mg(2+) as a cofactor.

The protein resides in the cytoplasm. It carries out the reaction IMP + L-aspartate + GTP = N(6)-(1,2-dicarboxyethyl)-AMP + GDP + phosphate + 2 H(+). Its pathway is purine metabolism; AMP biosynthesis via de novo pathway; AMP from IMP: step 1/2. Its function is as follows. Plays an important role in the de novo pathway and in the salvage pathway of purine nucleotide biosynthesis. Catalyzes the first committed step in the biosynthesis of AMP from IMP. The protein is Adenylosuccinate synthetase of Candida tropicalis (strain ATCC MYA-3404 / T1) (Yeast).